The chain runs to 280 residues: uncharacterized protein (280 aa).

3–29 serves as a coordination point for NADP(+); it reads KKIAIVTGASSGFGLLAAVKLARSFFV. Residue Ser139 coordinates substrate. Catalysis depends on Tyr152, which acts as the Proton acceptor.

The protein belongs to the short-chain dehydrogenases/reductases (SDR) family.

This is an uncharacterized protein from Bacillus subtilis (strain 168).